The sequence spans 249 residues: Chymase (249 aa).

Residues 1–19 (MHCLPLTLLLLLLCSRAEA) form the signal peptide. Positions 20–21 (EE) are cleaved as a propeptide — activation peptide. One can recognise a Peptidase S1 domain in the interval 22–245 (IIGGTESKPH…YRPWINKVLK (224 aa)). A disulfide bond links cysteine 51 and cysteine 67. Residues histidine 66 and aspartate 110 each act as charge relay system in the active site. Disulfide bonds link cysteine 144–cysteine 209 and cysteine 175–cysteine 188. The active-site Charge relay system is the serine 203.

The protein belongs to the peptidase S1 family. Granzyme subfamily.

Its subcellular location is the secreted. The protein localises to the cytoplasmic granule. It carries out the reaction Preferential cleavage: Phe-|-Xaa &gt; Tyr-|-Xaa &gt; Trp-|-Xaa &gt; Leu-|-Xaa.. Its function is as follows. Major secreted protease of mast cells with suspected roles in vasoactive peptide generation, extracellular matrix degradation, and regulation of gland secretion. This Canis lupus familiaris (Dog) protein is Chymase (CMA1).